A 207-amino-acid chain; its full sequence is Ankyrin repeat-containing protein P1E11.10 (207 aa).

2 ANK repeats span residues 36 to 65 and 69 to 98; these read NGYTPIHAAVSYGHSDLLKILVERGGDINI and DGETPLFVCEKLEIAHDLINQYNADTTVKN.

Its subcellular location is the cytoplasm. It localises to the nucleus. The sequence is that of Ankyrin repeat-containing protein P1E11.10 from Schizosaccharomyces pombe (strain 972 / ATCC 24843) (Fission yeast).